The primary structure comprises 170 residues: Large ribosomal subunit protein uL10 (170 aa).

This sequence belongs to the universal ribosomal protein uL10 family. In terms of assembly, part of the ribosomal stalk of the 50S ribosomal subunit. The N-terminus interacts with L11 and the large rRNA to form the base of the stalk. The C-terminus forms an elongated spine to which L12 dimers bind in a sequential fashion forming a multimeric L10(L12)X complex.

Functionally, forms part of the ribosomal stalk, playing a central role in the interaction of the ribosome with GTP-bound translation factors. This Novosphingobium aromaticivorans (strain ATCC 700278 / DSM 12444 / CCUG 56034 / CIP 105152 / NBRC 16084 / F199) protein is Large ribosomal subunit protein uL10.